A 247-amino-acid polypeptide reads, in one-letter code: tRNA pseudouridine synthase A (247 aa).

D52 serves as the catalytic Nucleophile. Residue Y111 coordinates substrate.

This sequence belongs to the tRNA pseudouridine synthase TruA family. As to quaternary structure, homodimer.

The catalysed reaction is uridine(38/39/40) in tRNA = pseudouridine(38/39/40) in tRNA. Formation of pseudouridine at positions 38, 39 and 40 in the anticodon stem and loop of transfer RNAs. This is tRNA pseudouridine synthase A from Caulobacter vibrioides (strain ATCC 19089 / CIP 103742 / CB 15) (Caulobacter crescentus).